Reading from the N-terminus, the 195-residue chain is Packaging protein 2 (195 aa).

Positions 1-124 (MAPKKKLQLP…QEQQQRQGYR (124 aa)) are disordered. Residues 15–53 (TDEEEYWDSQAEEVLDEEEEMMEDWDSLDEASEAEEVSD) show a composition bias toward acidic residues. Low complexity predominate over residues 54 to 63 (ETPSPSVAFP).

It belongs to the adenoviridae splicing factor family. Part of a genome packaging complex composed of packaging proteins 1, 2 and 3; this complex specifically binds to the packaging sequence on the left end of viral genomic DNA and performs packaging of the viral genome. Self-assembles into higher-order structures.

The protein localises to the host nucleus. Its function is as follows. Component of the packaging machinery which encapsidates the viral DNA into preformed capsids and transcriptional activator of the viral major late promoter (MLP). Binds, along with packaging proteins 1 and 3, to the specific packaging sequence on the left end of viral genomic DNA and plays an active role in packaging of the viral genome into preformed capsids. Specifically binds to the 5'-TTTG-3' nucleotides of the repeats making up the packaging sequence. Forms a transcription factor called DEF-A through cooperative binding with packaging protein 1. DEF-A binds to downstream elements of the major late promoter (MLP) and stimulates transcription from the MLP after initiation of viral DNA replication. Simultaneously suppresses early gene expression and is thus likely to participate in the early-late switch in the expression pattern of the late viral proteins. May as well enhance transcription from IVa2 and pIX promoters. The polypeptide is Packaging protein 2 (Homo sapiens (Human)).